A 274-amino-acid polypeptide reads, in one-letter code: Penicillin-insensitive murein endopeptidase (274 aa).

A signal peptide spans 1–19; that stretch reads MKKTALALLALLVSSASLA. 3 disulfides stabilise this stretch: cysteine 44/cysteine 265, cysteine 187/cysteine 235, and cysteine 216/cysteine 223. Residues histidine 110, histidine 113, aspartate 120, aspartate 147, histidine 150, and histidine 211 each coordinate Zn(2+). Residues 225 to 274 are disordered; it reads DQPLPPPGDGCGAELQSWFEPPEPGTTKPEKKTPPPLPPSCQALLDEHVL.

It belongs to the peptidase M74 family. Dimer. The cofactor is Zn(2+).

Its subcellular location is the periplasm. In terms of biological role, murein endopeptidase that cleaves the D-alanyl-meso-2,6-diamino-pimelyl amide bond that connects peptidoglycan strands. Likely plays a role in the removal of murein from the sacculus. This chain is Penicillin-insensitive murein endopeptidase, found in Citrobacter koseri (strain ATCC BAA-895 / CDC 4225-83 / SGSC4696).